The following is a 3471-amino-acid chain: Genome polyprotein (3471 aa).

A coiled-coil region spans residues E513–K603. 2 disordered regions span residues K603 to E639 and N1271 to S1307. Polar residues-rich tracts occupy residues Q606–A621 and N1271–V1291. A run of 2 helical transmembrane segments spans residues D1493–Y1513 and M1592–P1612. The SF3 helicase domain occupies L1748 to P1914. ATP is bound at residue G1774–S1781. Residues I2360 to L2380 form a helical membrane-spanning segment. Acidic residues predominate over residues E2391 to E2401. 2 disordered regions span residues E2391–D2411 and V2435–G2460. A compositionally biased stretch (basic and acidic residues) spans V2435–R2448. The Peptidase C3 domain maps to G2629 to L2847. Active-site for picornain 3C-like protease activity residues include H2677, E2714, and C2808. The 132-residue stretch at T3152–Y3283 folds into the RdRp catalytic domain.

Post-translationally, specific enzymatic cleavages by picornain 3C-like protease in vivo yield mature proteins. Picornain 3C-like protease is autocatalytically processed.

The protein resides in the virion. It localises to the host membrane. The enzyme catalyses RNA(n) + a ribonucleoside 5'-triphosphate = RNA(n+1) + diphosphate. Functionally, picornain 3C-like protease is a thiol protease that probably cleaves the polyprotein. The polypeptide is Genome polyprotein (Oryza sativa (Rice)).